Reading from the N-terminus, the 96-residue chain is Co-chaperonin GroES 1 (96 aa).

The protein belongs to the GroES chaperonin family. In terms of assembly, heptamer of 7 subunits arranged in a ring. Interacts with the chaperonin GroEL.

Its subcellular location is the cytoplasm. Its function is as follows. Together with the chaperonin GroEL, plays an essential role in assisting protein folding. The GroEL-GroES system forms a nano-cage that allows encapsulation of the non-native substrate proteins and provides a physical environment optimized to promote and accelerate protein folding. GroES binds to the apical surface of the GroEL ring, thereby capping the opening of the GroEL channel. The protein is Co-chaperonin GroES 1 of Vibrio cholerae serotype O1 (strain ATCC 39315 / El Tor Inaba N16961).